The chain runs to 342 residues: Ferredoxin--NADP reductase (342 aa).

FAD-binding residues include C17, D36, Q44, Y49, V89, F124, D289, and T330.

The protein belongs to the ferredoxin--NADP reductase type 2 family. In terms of assembly, homodimer. FAD serves as cofactor.

The catalysed reaction is 2 reduced [2Fe-2S]-[ferredoxin] + NADP(+) + H(+) = 2 oxidized [2Fe-2S]-[ferredoxin] + NADPH. This chain is Ferredoxin--NADP reductase, found in Nitrobacter hamburgensis (strain DSM 10229 / NCIMB 13809 / X14).